A 184-amino-acid polypeptide reads, in one-letter code: GTP cyclohydrolase 1 (184 aa).

Zn(2+) is bound by residues Cys-75, His-78, and Cys-146.

This sequence belongs to the GTP cyclohydrolase I family. As to quaternary structure, toroid-shaped homodecamer, composed of two pentamers of five dimers.

It catalyses the reaction GTP + H2O = 7,8-dihydroneopterin 3'-triphosphate + formate + H(+). It participates in cofactor biosynthesis; 7,8-dihydroneopterin triphosphate biosynthesis; 7,8-dihydroneopterin triphosphate from GTP: step 1/1. The polypeptide is GTP cyclohydrolase 1 (Streptococcus sanguinis (strain SK36)).